We begin with the raw amino-acid sequence, 830 residues long: Kinesin-like protein KIN-14B (830 aa).

A coiled-coil region spans residues 56–97 (ENISDDNTESEAKVQKIQDELVSLNAQLKQITLQRREALNNY). The region spanning 103-425 (NIRVFCRIRP…LGFATRVRSI (323 aa)) is the Kinesin motor domain. ATP is bound at residue 182–189 (GQTGSGKT). Residues 434 to 476 (EMKARKETLLIDLGQKVNDLEHECEDIRRKIKNLEESMEHLTG) are a coiled coil.

The protein belongs to the TRAFAC class myosin-kinesin ATPase superfamily. Kinesin family. KIN-14 subfamily.

This Oryza sativa subsp. japonica (Rice) protein is Kinesin-like protein KIN-14B.